We begin with the raw amino-acid sequence, 255 residues long: MGKLPRPVPWLAAGENFPPLEFAWGRHDPAPGLLAAGAALDVPTLIQAYSRGIFPWFSLGQPVLWWSPDPRMVLHTEKFKLHRSLRKSLIHFLDDPECEIKFDSAFEHVIKACASQPRAGQPGTWIVPDMVQAYSSLHRAGYAHSVETWVRGKLVGGLYCVKLGRMVFGESMFAHQTDASKIALAALVGFCRAHQIAMIDCQQNTRHLASLGAAEIDRADFVRHLAQNVEKTTPPWQFEPVYWKQILTAEKPTLP.

This sequence belongs to the L/F-transferase family.

It localises to the cytoplasm. The enzyme catalyses N-terminal L-lysyl-[protein] + L-leucyl-tRNA(Leu) = N-terminal L-leucyl-L-lysyl-[protein] + tRNA(Leu) + H(+). The catalysed reaction is N-terminal L-arginyl-[protein] + L-leucyl-tRNA(Leu) = N-terminal L-leucyl-L-arginyl-[protein] + tRNA(Leu) + H(+). It carries out the reaction L-phenylalanyl-tRNA(Phe) + an N-terminal L-alpha-aminoacyl-[protein] = an N-terminal L-phenylalanyl-L-alpha-aminoacyl-[protein] + tRNA(Phe). Its function is as follows. Functions in the N-end rule pathway of protein degradation where it conjugates Leu, Phe and, less efficiently, Met from aminoacyl-tRNAs to the N-termini of proteins containing an N-terminal arginine or lysine. The protein is Leucyl/phenylalanyl-tRNA--protein transferase of Polaromonas sp. (strain JS666 / ATCC BAA-500).